Reading from the N-terminus, the 1024-residue chain is RNA cytidine acetyltransferase (1024 aa).

An ATP-binding site is contributed by 287-296 (GRGKSAALGL). At K426 the chain carries N6-acetyllysine. Residue R470 coordinates ATP. One can recognise an N-acetyltransferase domain in the interval 558-753 (CLLPPVPPTQ…HSCIMLKTLA (196 aa)). Residues 629–631 (IAV) and 636–642 (QGMGYGS) contribute to the acetyl-CoA site. Residues 702–1024 (PAERLDYLGV…RKDMKLKRKK (323 aa)) form a required for localization to the nucleolus and midbody region. Position 716 is a phosphothreonine (T716). Position 725 (R725) interacts with acetyl-CoA. 3 positions are modified to phosphoserine: S934, S984, and S987. The interval 990–1024 (SDKKRKLETKQEPKQSKKLKKRDNNRKDMKLKRKK) is disordered. The segment covering 1005–1024 (SKKLKKRDNNRKDMKLKRKK) has biased composition (basic residues).

It belongs to the RNA cytidine acetyltransferase family. NAT10 subfamily. Part of the small subunit (SSU) processome, composed of more than 70 proteins and the RNA chaperone small nucleolar RNA (snoRNA) U3. Interacts with THUMPD1. Interacts with SUN1 (via N-terminus). Interacts with TERT.

Its subcellular location is the nucleus. It localises to the nucleolus. It catalyses the reaction a cytidine in 18S rRNA + acetyl-CoA + ATP + H2O = an N(4)-acetylcytidine in 18S rRNA + ADP + phosphate + CoA + H(+). The enzyme catalyses a cytidine in tRNA + acetyl-CoA + ATP + H2O = an N(4)-acetylcytidine in tRNA + ADP + phosphate + CoA + H(+). It carries out the reaction a cytidine in mRNA + acetyl-CoA + ATP + H2O = an N(4)-acetylcytidine in mRNA + ADP + phosphate + CoA + H(+). Functionally, RNA cytidine acetyltransferase that catalyzes the formation of N(4)-acetylcytidine (ac4C) modification on mRNAs, 18S rRNA and tRNAs. Catalyzes ac4C modification of a broad range of mRNAs, enhancing mRNA stability and translation. mRNA ac4C modification is frequently present within wobble cytidine sites and promotes translation efficiency. Mediates the formation of ac4C at position 1842 in 18S rRNA. May also catalyze the formation of ac4C at position 1337 in 18S rRNA. Required for early nucleolar cleavages of precursor rRNA at sites A0, A1 and A2 during 18S rRNA synthesis. Catalyzes the formation of ac4C in serine and leucine tRNAs. Requires the tRNA-binding adapter protein THUMPD1 for full tRNA acetyltransferase activity but not for 18S rRNA acetylation. In addition to RNA acetyltransferase activity, also able to acetylate lysine residues of proteins, such as histones, microtubules, p53/TP53 and MDM2, in vitro. The relevance of the protein lysine acetyltransferase activity is however unsure in vivo. Activates telomerase activity by stimulating the transcription of TERT, and may also regulate telomerase function by affecting the balance of telomerase subunit assembly, disassembly, and localization. Involved in the regulation of centrosome duplication by acetylating CENATAC during mitosis, promoting SASS6 proteasome degradation. Part of the small subunit (SSU) processome, first precursor of the small eukaryotic ribosomal subunit. During the assembly of the SSU processome in the nucleolus, many ribosome biogenesis factors, an RNA chaperone and ribosomal proteins associate with the nascent pre-rRNA and work in concert to generate RNA folding, modifications, rearrangements and cleavage as well as targeted degradation of pre-ribosomal RNA by the RNA exosome. The sequence is that of RNA cytidine acetyltransferase from Mus musculus (Mouse).